Here is a 99-residue protein sequence, read N- to C-terminus: Protein Frey (99 aa).

Residues 7 to 29 traverse the membrane as a helical segment; sequence GALYPRAGLSLFLLYLVLAAVLL. The disordered stretch occupies residues 65–88; it reads PKHPWPRGPRPLLSRAQQRKRDGP.

Interacts with SPPL2C (via active sites); the interaction stabilizes FREY1 protein and inhibits SPPL2C proteolytic activity. Interacts with IZUMO1; the interaction retains IZUMO1 at the endoplasmic reticulum membrane and coordinates IZUMO1 complex assembly.

Its subcellular location is the endoplasmic reticulum membrane. Functionally, key regulator for male fertility expressed transiently in round spermatids where it recruits IZUMO1 at the endoplasmic reticulum (ER) membrane and coordinates the oolemmal binding multimeric complex (IZUMO1 complex) assembly. Upon complete assembly of the IZUMO1 complex, its ER retention is released, facilitating IZUMO1 complex export to the acrosome. Through the interaction with SPPL2C, inhibits its intramembrane protease activity directly accessing the catalytic center of an I-CLiP. The sequence is that of Protein Frey from Ailuropoda melanoleuca (Giant panda).